The primary structure comprises 287 residues: MKSLYDICAPAKLNLFLHITGRRSDGYHLLQSVFMLIDWCDTLHFDLRVDGQISREDLATPLPFDDLVVRAARALKAASGSPLGVHVGIEKCIPAQAGMGGGSSDAASTLLALNHLWRLNFSLEKLISIGLQLGADVPFFLGGHNAWVEGIGEKMDPVVLPSGRFLVVKPVEGLETRLIFSDPALKRDSETAIISGFAANAFGFGRNDLQSVAQRLCPGVTQALEWLASRGLSGRMTGSGSAVFAQTLQDVDLRGAPSGFQVRLCKSLDVHPLVGWAVSDRLSVGSA.

The active site involves lysine 12. Residue 94-104 (PAQAGMGGGSS) coordinates ATP. Residue aspartate 136 is part of the active site.

It belongs to the GHMP kinase family. IspE subfamily.

The enzyme catalyses 4-CDP-2-C-methyl-D-erythritol + ATP = 4-CDP-2-C-methyl-D-erythritol 2-phosphate + ADP + H(+). It functions in the pathway isoprenoid biosynthesis; isopentenyl diphosphate biosynthesis via DXP pathway; isopentenyl diphosphate from 1-deoxy-D-xylulose 5-phosphate: step 3/6. Its function is as follows. Catalyzes the phosphorylation of the position 2 hydroxy group of 4-diphosphocytidyl-2C-methyl-D-erythritol. This chain is 4-diphosphocytidyl-2-C-methyl-D-erythritol kinase, found in Albidiferax ferrireducens (strain ATCC BAA-621 / DSM 15236 / T118) (Rhodoferax ferrireducens).